We begin with the raw amino-acid sequence, 598 residues long: Elongation factor 4 (598 aa).

A tr-type G domain is found at 2 to 184; it reads NNIRNFAIIA…AIVAKLPAPQ (183 aa). Residues 14 to 19 and 131 to 134 contribute to the GTP site; these read DHGKST and NKVD.

Belongs to the TRAFAC class translation factor GTPase superfamily. Classic translation factor GTPase family. LepA subfamily.

The protein localises to the cell membrane. The enzyme catalyses GTP + H2O = GDP + phosphate + H(+). Required for accurate and efficient protein synthesis under certain stress conditions. May act as a fidelity factor of the translation reaction, by catalyzing a one-codon backward translocation of tRNAs on improperly translocated ribosomes. Back-translocation proceeds from a post-translocation (POST) complex to a pre-translocation (PRE) complex, thus giving elongation factor G a second chance to translocate the tRNAs correctly. Binds to ribosomes in a GTP-dependent manner. This Wolbachia sp. subsp. Drosophila simulans (strain wRi) protein is Elongation factor 4.